Reading from the N-terminus, the 202-residue chain is Translation initiation factor IF-3 (202 aa).

It belongs to the IF-3 family. As to quaternary structure, monomer.

It is found in the cytoplasm. IF-3 binds to the 30S ribosomal subunit and shifts the equilibrium between 70S ribosomes and their 50S and 30S subunits in favor of the free subunits, thus enhancing the availability of 30S subunits on which protein synthesis initiation begins. This Prochlorococcus marinus (strain MIT 9211) protein is Translation initiation factor IF-3.